We begin with the raw amino-acid sequence, 197 residues long: Chaperone protein dnaJ 20, chloroplastic (197 aa).

The transit peptide at Met1–Lys60 directs the protein to the chloroplast. Residues Ser66 to Leu133 enclose the J domain. Residues Ser169 to Ser197 are disordered.

Belongs to the DnaJ family. C/III subfamily. Light-grown seedlings.

The protein resides in the plastid. The protein localises to the chloroplast. Functionally, plays a continuous role in plant development probably in the structural organization of compartments. This is Chaperone protein dnaJ 20, chloroplastic (ATJ20) from Arabidopsis thaliana (Mouse-ear cress).